Reading from the N-terminus, the 469-residue chain is Putative dipeptidase SAUSA300_1697 (469 aa).

Histidine 84 contributes to the Zn(2+) binding site. Residue aspartate 86 is part of the active site. Aspartate 115 is a binding site for Zn(2+). Residue glutamate 149 is the Proton acceptor of the active site. Residues glutamate 150, aspartate 173, and histidine 440 each coordinate Zn(2+).

The protein belongs to the peptidase M20A family. Zn(2+) is required as a cofactor.

This Staphylococcus aureus (strain USA300) protein is Putative dipeptidase SAUSA300_1697.